Here is a 265-residue protein sequence, read N- to C-terminus: Deoxyguanosine kinase, mitochondrial (265 aa).

Residue 32–40 (GNIAVGKST) participates in ATP binding. Substrate is bound by residues Glu-57, Tyr-88, Gln-99, and Arg-106. Glu-129 (proton acceptor) is an active-site residue. Residues Arg-130 and Asp-135 each contribute to the substrate site. 190–194 (RLQRR) contributes to the ATP binding site. Substrate is bound at residue Glu-199. 242-244 (EDF) serves as a coordination point for ATP.

Belongs to the DCK/DGK family. In terms of assembly, homodimer.

Its subcellular location is the mitochondrion. It carries out the reaction 2'-deoxyguanosine + ATP = dGMP + ADP + H(+). In terms of biological role, phosphorylates deoxyguanosine in the mitochondrial matrix with high efficiency but shows very low activity against other deoxynucleosides. This Xenopus laevis (African clawed frog) protein is Deoxyguanosine kinase, mitochondrial.